A 535-amino-acid polypeptide reads, in one-letter code: Keratin, type II cytoskeletal 79 (535 aa).

The span at 1 to 12 (MRSSVSRQTYST) shows a compositional bias: polar residues. Residues 1 to 52 (MRSSVSRQTYSTKGGFSSNSASGGSGSQARTSFSSVTVSRSSGSGGGAHCGP) form a disordered region. The segment at 1-141 (MRSSVSRQTY…DPEIQRVRTQ (141 aa)) is head. Residues 32–42 (SFSSVTVSRSS) show a composition bias toward low complexity. The span at 43-52 (GSGGGAHCGP) shows a compositional bias: gly residues. Residues 142–177 (EREQIKTLNNKFASFIDKVRFLEQQNKVLETKWALL) are coil 1A. One can recognise an IF rod domain in the interval 142 to 457 (EREQIKTLNN…KLLESEESRM (316 aa)). Residues 178-198 (QEQGQNLGVTRNNLEPLFEAY) form a linker 1 region. Residues 199–290 (LGSMRSTLDR…QLYEMELSQV (92 aa)) form a coil 1B region. The tract at residues 291–314 (QTHVSNTNVVLSMDNNRNLDLDSI) is linker 12. The interval 315–453 (IAEVKAQYEL…ATYRKLLESE (139 aa)) is coil 2. Positions 454–535 (ESRMSGECPS…TTVKTSSQRY (82 aa)) are tail.

It belongs to the intermediate filament family. In terms of assembly, heterotetramer of two type I and two type II keratins. As to expression, expressed in skeletal muscle, skin and scalp, but not in any other tissues or organs examined.

The protein is Keratin, type II cytoskeletal 79 (KRT79) of Homo sapiens (Human).